Here is a 211-residue protein sequence, read N- to C-terminus: Glutathione S-transferase (211 aa).

The 85-residue stretch at 3–87 folds into the GST N-terminal domain; the sequence is DNIVLYYFDA…YLSKKYNICG (85 aa). Glutathione is bound by residues 58 to 59, 71 to 72, Asp-105, Lys-117, and Thr-121; these read QV and QS. One can recognise a GST C-terminal domain in the interval 89-211; it reads SELNEFYADM…YITNRKESVY (123 aa).

This sequence belongs to the GST superfamily. As to quaternary structure, homodimer. In the absence of ligands two homodimers may interact to form a tetramer.

It carries out the reaction RX + glutathione = an S-substituted glutathione + a halide anion + H(+). Inhibited by chloroquine, cibacron blue, ferriprotoporphyrin IX (hemin) and S-hexylglutathione. Its function is as follows. Conjugation of reduced glutathione to a wide number of exogenous and endogenous hydrophobic electrophiles. May also function as a storage protein or ligandin for parasitotoxic ferriprotoporphyrin IX (hemin). In Plasmodium falciparum (isolate 3D7), this protein is Glutathione S-transferase.